Consider the following 154-residue polypeptide: Transcriptional repressor NrdR (154 aa).

Residues 3–34 (CPFCGAEDTAVADTRLNDEADVVRRRRKCNAC) fold into a zinc finger. Positions 49–139 (PQVVKKNGLR…VYRNFEDVDA (91 aa)) constitute an ATP-cone domain.

The protein belongs to the NrdR family. The cofactor is Zn(2+).

In terms of biological role, negatively regulates transcription of bacterial ribonucleotide reductase nrd genes and operons by binding to NrdR-boxes. This Dechloromonas aromatica (strain RCB) protein is Transcriptional repressor NrdR.